Consider the following 320-residue polypeptide: Solute carrier family 35 member B1 (320 aa).

8 helical membrane-spanning segments follow: residues 9 to 29 (GLRL…YGIL), 49 to 69 (FALS…KLLI), 81 to 103 (QSWL…NSAL), 134 to 154 (YPLT…LFMY), 166 to 186 (TVGY…LTGV), 202 to 222 (MMLS…VLTG), 241 to 261 (IVLF…TVVY), and 283 to 303 (VILF…LVFL). A Di-lysine motif motif is present at residues 316–320 (KKPSH).

Belongs to the nucleotide-sugar transporter family. SLC35B subfamily.

Its subcellular location is the endoplasmic reticulum membrane. In terms of biological role, probable sugar transporter. The protein is Solute carrier family 35 member B1 (slc35b1) of Xenopus laevis (African clawed frog).